Reading from the N-terminus, the 128-residue chain is Protein yippee-like At3g08990 (128 aa).

In terms of domain architecture, Yippee spans 12 to 109; the sequence is LVYSCKYCQT…LERFKVLGPY (98 aa). Positions 16, 19, 72, and 75 each coordinate Zn(2+).

It belongs to the yippee family.

The sequence is that of Protein yippee-like At3g08990 from Arabidopsis thaliana (Mouse-ear cress).